A 143-amino-acid polypeptide reads, in one-letter code: Adrenodoxin, mitochondrial (143 aa).

Residues 1–19 constitute a mitochondrion transit peptide; that stretch reads CSAVAVRTLRPLSLSARAA. The 2Fe-2S ferredoxin-type domain maps to 26-130; that stretch reads ITVHFINRDG…NMTVRVPEAV (105 aa). [2Fe-2S] cluster contacts are provided by Cys65, Cys71, Cys74, and Cys111.

It belongs to the adrenodoxin/putidaredoxin family. [2Fe-2S] cluster serves as cofactor.

It localises to the mitochondrion matrix. In terms of biological role, essential for the synthesis of various steroid hormones. Participates in the reduction of mitochondrial cytochrome P450 for steroidogenesis. Transfers electrons from adrenodoxin reductase to CYP11A1, a cytochrome P450 that catalyzes cholesterol side-chain cleavage. Does not form a ternary complex with adrenodoxin reductase and CYP11A1 but shuttles between the two enzymes to transfer electrons. In Gallus gallus (Chicken), this protein is Adrenodoxin, mitochondrial (FDX1).